The sequence spans 142 residues: Large ribosomal subunit protein uL23 (142 aa).

It belongs to the universal ribosomal protein uL23 family.

The polypeptide is Large ribosomal subunit protein uL23 (RPL25) (Kluyveromyces lactis (strain ATCC 8585 / CBS 2359 / DSM 70799 / NBRC 1267 / NRRL Y-1140 / WM37) (Yeast)).